The chain runs to 117 residues: Large ribosomal subunit protein bL20 (117 aa).

It belongs to the bacterial ribosomal protein bL20 family.

Its function is as follows. Binds directly to 23S ribosomal RNA and is necessary for the in vitro assembly process of the 50S ribosomal subunit. It is not involved in the protein synthesizing functions of that subunit. The sequence is that of Large ribosomal subunit protein bL20 from Symbiobacterium thermophilum (strain DSM 24528 / JCM 14929 / IAM 14863 / T).